A 174-amino-acid chain; its full sequence is MRPVAPEKDGPRVNEEIRIREVQLIDQDGQNRGVLPTRDALLLAQEAGLDLVEISPNSSPPVCKILDFGRFKYQNQKKASEARKKQKVVEVKEIKLRPGIDTHDYDVKMKAMLRFFEEGDKVKVTLRFRGREMAHQDIGYKLLQKLKEDVTNIAKVEAEPMLEGRQMIMILAPR.

It belongs to the IF-3 family. Monomer.

It is found in the cytoplasm. Its function is as follows. IF-3 binds to the 30S ribosomal subunit and shifts the equilibrium between 70S ribosomes and their 50S and 30S subunits in favor of the free subunits, thus enhancing the availability of 30S subunits on which protein synthesis initiation begins. This is Translation initiation factor IF-3 from Azorhizobium caulinodans (strain ATCC 43989 / DSM 5975 / JCM 20966 / LMG 6465 / NBRC 14845 / NCIMB 13405 / ORS 571).